A 208-amino-acid polypeptide reads, in one-letter code: Guanylate kinase (208 aa).

The Guanylate kinase-like domain occupies 4–181 (GLLIVISGPS…AVEKIQSIIS (178 aa)). 11 to 18 (GPSGTGKG) is an ATP binding site.

It belongs to the guanylate kinase family.

It localises to the cytoplasm. It carries out the reaction GMP + ATP = GDP + ADP. Essential for recycling GMP and indirectly, cGMP. The protein is Guanylate kinase of Clostridium tetani (strain Massachusetts / E88).